We begin with the raw amino-acid sequence, 198 residues long: Holliday junction branch migration complex subunit RuvA (198 aa).

Residues 1 to 63 (MIALLTGQIA…EDAIQLYGFR (63 aa)) form a domain I region. A domain II region spans residues 64–142 (TSLEKSFFQL…KLDLSSVVVP (79 aa)). The segment at 143-153 (EPRQMPEDDLL) is flexible linker. Residues 153–198 (LEDVVSALLNLGYKEPQVRKVLAGLNPGSDASLEGVLKQALKSLMR) form a domain III region.

Belongs to the RuvA family. Homotetramer. Forms an RuvA(8)-RuvB(12)-Holliday junction (HJ) complex. HJ DNA is sandwiched between 2 RuvA tetramers; dsDNA enters through RuvA and exits via RuvB. An RuvB hexamer assembles on each DNA strand where it exits the tetramer. Each RuvB hexamer is contacted by two RuvA subunits (via domain III) on 2 adjacent RuvB subunits; this complex drives branch migration. In the full resolvosome a probable DNA-RuvA(4)-RuvB(12)-RuvC(2) complex forms which resolves the HJ.

Its subcellular location is the cytoplasm. The RuvA-RuvB-RuvC complex processes Holliday junction (HJ) DNA during genetic recombination and DNA repair, while the RuvA-RuvB complex plays an important role in the rescue of blocked DNA replication forks via replication fork reversal (RFR). RuvA specifically binds to HJ cruciform DNA, conferring on it an open structure. The RuvB hexamer acts as an ATP-dependent pump, pulling dsDNA into and through the RuvAB complex. HJ branch migration allows RuvC to scan DNA until it finds its consensus sequence, where it cleaves and resolves the cruciform DNA. The sequence is that of Holliday junction branch migration complex subunit RuvA from Pelobacter propionicus (strain DSM 2379 / NBRC 103807 / OttBd1).